A 462-amino-acid polypeptide reads, in one-letter code: GTPase Der (462 aa).

2 consecutive EngA-type G domains span residues 2-164 and 198-369; these read QKVI…EEKV and IRVG…KNYT. Residues 8–15, 55–59, 116–119, 204–211, 251–255, and 315–318 each bind GTP; these read GKPNVGKS, DSGGL, NKID, GRVNVGKS, DTAGI, and NKWD. The region spanning 370 to 454 is the KH-like domain; the sequence is QKIQTSKLNE…PIVLIPKKRG (85 aa).

This sequence belongs to the TRAFAC class TrmE-Era-EngA-EngB-Septin-like GTPase superfamily. EngA (Der) GTPase family. In terms of assembly, associates with the 50S ribosomal subunit.

GTPase that plays an essential role in the late steps of ribosome biogenesis. In Campylobacter concisus (strain 13826), this protein is GTPase Der.